The primary structure comprises 196 residues: HTH-type transcriptional regulator Hpr (196 aa).

Residues 13–157 (SIVFSHKMAL…LICIVRHIYG (145 aa)) form the HTH marR-type domain. The H-T-H motif DNA-binding region spans 63–86 (ISDIASHGVMHVSTAFNFSKKLEA).

Homodimer.

Its function is as follows. Negative regulator of protease production and sporulation. This Shouchella clausii (strain KSM-K16) (Alkalihalobacillus clausii) protein is HTH-type transcriptional regulator Hpr.